The chain runs to 256 residues: Adenylate kinase (256 aa).

ATP is bound at residue 49-54 (GAGKGT). The segment at 69-98 (ATGDMLREQVQQKTPLGIEAKKIMDAGGLV) is NMP. Residues threonine 70, arginine 75, 96–98 (GLV), 125–128 (GFPR), and glutamine 132 contribute to the AMP site. The tract at residues 166 to 203 (GRLVHPASGRSYHKEFNPPKKRNVDDVTGEPLIQRSDD) is LID. ATP-binding positions include arginine 167 and 176–177 (SY). Positions 200 and 211 each coordinate AMP. Glutamine 239 is an ATP binding site.

This sequence belongs to the adenylate kinase family. AK2 subfamily. As to quaternary structure, monomer.

It localises to the cytoplasm. The protein resides in the cytosol. Its subcellular location is the mitochondrion intermembrane space. It catalyses the reaction AMP + ATP = 2 ADP. Functionally, catalyzes the reversible transfer of the terminal phosphate group between ATP and AMP. Plays an important role in cellular energy homeostasis and in adenine nucleotide metabolism. Adenylate kinase activity is critical for regulation of the phosphate utilization and the AMP de novo biosynthesis pathways. In Laccaria bicolor (strain S238N-H82 / ATCC MYA-4686) (Bicoloured deceiver), this protein is Adenylate kinase.